We begin with the raw amino-acid sequence, 193 residues long: MAEILIATERNEKGKTARKKGFIPGIIYGKDREGQSINFERGKLIAFLKEKGEKSKMNFQLNGENKQGIIKEVGRDAVTSSIIHIDIQEVSALEKVRWTIPIFFEGREQLKKKELYIQVYLTEVEVEGKASDIPNNITLNVGNLELGEEVKVKDLNIGSNIRIFNELENTIAIISSSQNTNKNIEEEDPSEVE.

Belongs to the bacterial ribosomal protein bL25 family. CTC subfamily. In terms of assembly, part of the 50S ribosomal subunit; part of the 5S rRNA/L5/L18/L25 subcomplex. Contacts the 5S rRNA. Binds to the 5S rRNA independently of L5 and L18.

Functionally, this is one of the proteins that binds to the 5S RNA in the ribosome where it forms part of the central protuberance. The polypeptide is Large ribosomal subunit protein bL25 (Clostridium tetani (strain Massachusetts / E88)).